The chain runs to 230 residues: Capsid protein (230 aa).

Residues 19–48 are compositionally biased toward low complexity; sequence PPTSDAASPSADQPAVSSSRSDSRLVSAPL. The disordered stretch occupies residues 19 to 54; the sequence is PPTSDAASPSADQPAVSSSRSDSRLVSAPLPAAPPA.

It belongs to the tymoviruses capsid protein family.

It localises to the virion. Functionally, self-assembles to form a T=3 icosahedral capsid composed of 180 copies of the capsid protein. The capsid encapsulates the single-stranded RNA genome. This is Capsid protein from Grapevine fleck virus (isolate Italy/MT48) (GFkV).